The sequence spans 436 residues: 3-ketoacyl-CoA thiolase (436 aa).

The active-site Acyl-thioester intermediate is the Cys-99. Catalysis depends on proton acceptor residues His-392 and Cys-422.

This sequence belongs to the thiolase-like superfamily. Thiolase family. As to quaternary structure, heterotetramer of two alpha chains (FadJ) and two beta chains (FadI).

It localises to the cytoplasm. The catalysed reaction is an acyl-CoA + acetyl-CoA = a 3-oxoacyl-CoA + CoA. It participates in lipid metabolism; fatty acid beta-oxidation. Catalyzes the final step of fatty acid oxidation in which acetyl-CoA is released and the CoA ester of a fatty acid two carbons shorter is formed. The protein is 3-ketoacyl-CoA thiolase of Escherichia coli (strain SMS-3-5 / SECEC).